Here is a 623-residue protein sequence, read N- to C-terminus: tRNA uridine 5-carboxymethylaminomethyl modification enzyme MnmG (623 aa).

12–17 is an FAD binding site; that stretch reads GAGHAG. 272–286 serves as a coordination point for NAD(+); that stretch reads GPRYCPSIEDKINRF.

This sequence belongs to the MnmG family. In terms of assembly, homodimer. Heterotetramer of two MnmE and two MnmG subunits. FAD serves as cofactor.

It localises to the cytoplasm. In terms of biological role, NAD-binding protein involved in the addition of a carboxymethylaminomethyl (cmnm) group at the wobble position (U34) of certain tRNAs, forming tRNA-cmnm(5)s(2)U34. In Flavobacterium psychrophilum (strain ATCC 49511 / DSM 21280 / CIP 103535 / JIP02/86), this protein is tRNA uridine 5-carboxymethylaminomethyl modification enzyme MnmG.